A 355-amino-acid polypeptide reads, in one-letter code: Carbohydrate sulfotransferase 10 (355 aa).

Over 1–6 (MHHRWL) the chain is Cytoplasmic. The chain crosses the membrane as a helical; Signal-anchor for type II membrane protein span at residues 7 to 27 (LLVACFWVLFMLMVASKLITL). Residues 28–355 (TMKDPEGYGN…FGYKEPTFLF (328 aa)) are Lumenal-facing. 2 N-linked (GlcNAc...) asparagine glycosylation sites follow: asparagine 93 and asparagine 98. Residues 126–132 (PKVGNTQ) and 188–196 (RDPFERLIS) contribute to the 3'-phosphoadenylyl sulfate site. N-linked (GlcNAc...) asparagine glycosylation is present at asparagine 316.

It belongs to the sulfotransferase 2 family.

The protein localises to the golgi apparatus membrane. Functionally, catalyzes the transfer of sulfate to position 3 of terminal glucuronic acid of both protein- and lipid-linked oligosaccharides. Participates in biosynthesis of HNK-1 carbohydrate structure, a sulfated glucuronyl-lactosaminyl residue carried by many neural recognition molecules. This Xenopus laevis (African clawed frog) protein is Carbohydrate sulfotransferase 10 (chst10).